Consider the following 192-residue polypeptide: uncharacterized protein (192 aa).

The helical; Signal-anchor transmembrane segment at 7 to 29 (FIHSISGGSSLLSASEVFASAFF) threads the bilayer. The chain crosses the membrane as a helical span at residues 51-67 (YFLCVLVSTFLNSLVII).

It is found in the membrane. This is an uncharacterized protein from Saccharomyces cerevisiae (strain ATCC 204508 / S288c) (Baker's yeast).